The following is a 446-amino-acid chain: Tubulin beta-1 chain (446 aa).

Positions 1 to 4 (MREI) match the MREI motif motif. Positions 11, 69, 138, 142, 143, 144, 204, and 226 each coordinate GTP. Glu-69 provides a ligand contact to Mg(2+). Positions 426–446 (QDATAEEEGEFEEEGEYEDGA) are disordered. Positions 429–446 (TAEEEGEFEEEGEYEDGA) are enriched in acidic residues. Glu-438 carries the post-translational modification 5-glutamyl polyglutamate.

The protein belongs to the tubulin family. As to quaternary structure, dimer of alpha and beta chains. A typical microtubule is a hollow water-filled tube with an outer diameter of 25 nm and an inner diameter of 15 nM. Alpha-beta heterodimers associate head-to-tail to form protofilaments running lengthwise along the microtubule wall with the beta-tubulin subunit facing the microtubule plus end conferring a structural polarity. Microtubules usually have 13 protofilaments but different protofilament numbers can be found in some organisms and specialized cells. The cofactor is Mg(2+). In terms of processing, some glutamate residues at the C-terminus are polyglycylated, resulting in polyglycine chains on the gamma-carboxyl group. Glycylation is mainly limited to tubulin incorporated into axonemes (cilia and flagella) whereas glutamylation is prevalent in neuronal cells, centrioles, axonemes, and the mitotic spindle. Both modifications can coexist on the same protein on adjacent residues, and lowering polyglycylation levels increases polyglutamylation, and reciprocally. The precise function of polyglycylation is still unclear. Some glutamate residues at the C-terminus are polyglutamylated, resulting in polyglutamate chains on the gamma-carboxyl group. Polyglutamylation plays a key role in microtubule severing by spastin (SPAST). SPAST preferentially recognizes and acts on microtubules decorated with short polyglutamate tails: severing activity by SPAST increases as the number of glutamates per tubulin rises from one to eight, but decreases beyond this glutamylation threshold. In terms of tissue distribution, brain.

The protein localises to the cytoplasm. It is found in the cytoskeleton. Functionally, tubulin is the major constituent of microtubules, a cylinder consisting of laterally associated linear protofilaments composed of alpha- and beta-tubulin heterodimers. Microtubules grow by the addition of GTP-tubulin dimers to the microtubule end, where a stabilizing cap forms. Below the cap, tubulin dimers are in GDP-bound state, owing to GTPase activity of alpha-tubulin. The protein is Tubulin beta-1 chain (tubb1) of Notothenia neglecta (Yellowbelly rockcod).